Reading from the N-terminus, the 425-residue chain is Acyl-lipid (8-3)-desaturase (425 aa).

The segment at 1 to 25 is disordered; it reads MPPRDSYSYAAPPSAQLHEVDTPQE. Positions 18–93 constitute a Cytochrome b5 heme-binding domain; it reads HEVDTPQEHD…SRPVHKGYSP (76 aa). Heme contacts are provided by histidine 47 and histidine 69. A helical membrane pass occupies residues 134–154; it reads VAGAALIWHGYTFAGIAMLGV. The Histidine box-1 motif lies at 164–168; that stretch reads HEGGH. A helical membrane pass occupies residues 175–197; the sequence is IAFDRAIQVACYGLGCGMSGAWW. The short motif at 201 to 206 is the Histidine box-2 element; it reads HNKHHA. 2 consecutive transmembrane segments (helical) span residues 241–261 and 297–317; these read WLSM…ALGW and GAGY…MYIF. The Histidine box-3 motif lies at 365–369; the sequence is QIEHH.

It belongs to the fatty acid desaturase type 1 family. Fe(2+) is required as a cofactor.

Its subcellular location is the membrane. It catalyses the reaction an (8Z,11Z,14Z)-icosatrienoyl-containing glycerolipid + 2 Fe(II)-[cytochrome b5] + O2 + 2 H(+) = (5Z,8Z,11Z,14Z)-eicosatetraenoyl-containing glycerolipid + 2 Fe(III)-[cytochrome b5] + 2 H2O. It carries out the reaction an (8Z,11Z,14Z,17Z)-eicosatetraenoyl-containing glycerolipid + 2 Fe(II)-[cytochrome b5] + O2 + 2 H(+) = a (5Z,8Z,11Z,14Z,17Z)-eicosapentaenoyl-containing glycerolipid + 2 Fe(III)-[cytochrome b5] + 2 H2O. Functionally, fatty acid desaturase that introduces a cis double bond at the 5-position in 20-carbon polyunsaturated fatty acids incorporated in a glycerolipid that contain a Delta(8) double bond. The polypeptide is Acyl-lipid (8-3)-desaturase (Rebecca salina (Marine microalga)).